A 195-amino-acid chain; its full sequence is Coiled-coil domain-containing protein 184 (195 aa).

Positions G39 to Q68 form a coiled coil. The interval R98–L175 is disordered. Over residues P135–K146 the composition is skewed to acidic residues.

The protein is Coiled-coil domain-containing protein 184 (CCDC184) of Bos taurus (Bovine).